The chain runs to 274 residues: NH(3)-dependent NAD(+) synthetase (274 aa).

Residue 46–53 (GISGGQDS) coordinates ATP. Asp52 contacts Mg(2+). Residue Arg140 coordinates deamido-NAD(+). Thr160 is a binding site for ATP. Glu165 provides a ligand contact to Mg(2+). Deamido-NAD(+) contacts are provided by Lys173 and Asp180. Residues Lys189 and Thr211 each coordinate ATP. Position 260 to 261 (260 to 261 (HK)) interacts with deamido-NAD(+).

It belongs to the NAD synthetase family. Homodimer.

It carries out the reaction deamido-NAD(+) + NH4(+) + ATP = AMP + diphosphate + NAD(+) + H(+). Its pathway is cofactor biosynthesis; NAD(+) biosynthesis; NAD(+) from deamido-NAD(+) (ammonia route): step 1/1. Functionally, catalyzes the ATP-dependent amidation of deamido-NAD to form NAD. Uses ammonia as a nitrogen source. This chain is NH(3)-dependent NAD(+) synthetase, found in Lysinibacillus sphaericus (strain C3-41).